The following is a 105-amino-acid chain: Cuticle protein AM1159 (105 aa).

In terms of domain architecture, Chitin-binding type R&amp;R spans 16–81 (DGNFNYNFQT…PESPLLPVGP (66 aa)). Residues 25–46 (TSNGIEDTKTGTPGSQGQSNMQ) are disordered.

In terms of tissue distribution, arthrodial membrane.

This is Cuticle protein AM1159 from Cancer pagurus (Rock crab).